A 554-amino-acid polypeptide reads, in one-letter code: Sesquithujene synthase A (554 aa).

Residues D308 and D312 each coordinate Mg(2+). 2 residues coordinate substrate: D308 and D312. A DDXXD motif motif is present at residues 308–312; sequence DDMFD. The segment at 407 to 411 is determine the stereoselectivity of the enzyme; it reads SIGAN. Substrate-binding residues include R449 and N452. N452, S456, and E460 together coordinate Mg(2+).

The protein belongs to the terpene synthase family. As to quaternary structure, monomer. Mg(2+) serves as cofactor. Requires Mn(2+) as cofactor. As to expression, highly expressed in the husk. Detected in leaves.

The protein localises to the cytoplasm. It catalyses the reaction (2E,6E)-farnesyl diphosphate = sesquithujene + diphosphate. It carries out the reaction (2Z,6Z)-farnesyl diphosphate = (1S,5S,6S)-alpha-bergamotene + diphosphate. The enzyme catalyses (2E,6E)-farnesyl diphosphate = (E)-beta-farnesene + diphosphate. The catalysed reaction is (2E,6E)-farnesyl diphosphate = (S)-beta-bisabolene + diphosphate. It catalyses the reaction (2Z,6E)-farnesyl diphosphate = (-)-beta-curcumene + diphosphate. It carries out the reaction (2E,6E)-farnesyl diphosphate = gamma-curcumene + diphosphate. The enzyme catalyses (2E,6E)-farnesyl diphosphate = sesquisabinene B + diphosphate. Its pathway is secondary metabolite biosynthesis; terpenoid biosynthesis. Its function is as follows. Sesquiterpene synthase involved in the production after herbivore attack of a blend of volatiles that attracts natural enemies of herbivores. Converts farnesyl diphosphate to sesquithujene, (S)-beta-bisabolene, (Z)-alpha-bergamotene, sesquisabinene B and several minor products. Can also act in vitro as a monoterpene synthase, converting geranyl diphosphate to (S)-(-)-limonene, beta-myrcene and 11 other monoterpenes. The polypeptide is Sesquithujene synthase A (Zea mays (Maize)).